A 431-amino-acid polypeptide reads, in one-letter code: Adenylosuccinate lyase (431 aa).

N(6)-(1,2-dicarboxyethyl)-AMP contacts are provided by residues 4–5, 67–69, and 93–94; these read RY, RHD, and TS. H141 (proton donor/acceptor) is an active-site residue. Q212 lines the N(6)-(1,2-dicarboxyethyl)-AMP pocket. S262 (proton donor/acceptor) is an active-site residue. Residues S263, 268 to 270, N276, and 307 to 311 each bind N(6)-(1,2-dicarboxyethyl)-AMP; these read KRN and SAERI.

It belongs to the lyase 1 family. Adenylosuccinate lyase subfamily. As to quaternary structure, homodimer and homotetramer. Residues from neighboring subunits contribute catalytic and substrate-binding residues to each active site.

It carries out the reaction N(6)-(1,2-dicarboxyethyl)-AMP = fumarate + AMP. The catalysed reaction is (2S)-2-[5-amino-1-(5-phospho-beta-D-ribosyl)imidazole-4-carboxamido]succinate = 5-amino-1-(5-phospho-beta-D-ribosyl)imidazole-4-carboxamide + fumarate. It functions in the pathway purine metabolism; AMP biosynthesis via de novo pathway; AMP from IMP: step 2/2. It participates in purine metabolism; IMP biosynthesis via de novo pathway; 5-amino-1-(5-phospho-D-ribosyl)imidazole-4-carboxamide from 5-amino-1-(5-phospho-D-ribosyl)imidazole-4-carboxylate: step 2/2. Functionally, catalyzes two reactions in de novo purine nucleotide biosynthesis. Catalyzes the breakdown of 5-aminoimidazole- (N-succinylocarboxamide) ribotide (SAICAR or 2-[5-amino-1-(5-phospho-beta-D-ribosyl)imidazole-4-carboxamido]succinate) to 5-aminoimidazole-4-carboxamide ribotide (AICAR or 5-amino-1-(5-phospho-beta-D-ribosyl)imidazole-4-carboxamide) and fumarate, and of adenylosuccinate (ADS or N(6)-(1,2-dicarboxyethyl)-AMP) to adenosine monophosphate (AMP) and fumarate. The chain is Adenylosuccinate lyase (purB) from Staphylococcus epidermidis (strain ATCC 35984 / DSM 28319 / BCRC 17069 / CCUG 31568 / BM 3577 / RP62A).